The sequence spans 365 residues: Short-chain dehydrogenase iccH (365 aa).

Residues Leu-16, Arg-52, and Asp-70 each coordinate NADP(+). Asn-90 carries N-linked (GlcNAc...) asparagine glycosylation. Positions 102, 221, 225, and 260 each coordinate NADP(+). Tyr-221 serves as the catalytic Proton donor. Lys-225 acts as the Lowers pKa of active site Tyr in catalysis. A helical transmembrane segment spans residues 267–287; it reads IWVMFLLMKFVLPLLAPLAVW. 2 N-linked (GlcNAc...) asparagine glycosylation sites follow: Asn-291 and Asn-324.

It belongs to the short-chain dehydrogenases/reductases (SDR) family.

It localises to the membrane. It functions in the pathway mycotoxin biosynthesis. In terms of biological role, NADH-dependent flavin oxidoreductase; part of the gene cluster that mediates the biosynthesis of ilicicolin H, a 4-hydroxy-2-pyridonealkaloid that has potent and broad antifungal activities by inhibiting the mitochondrial respiration chain. IccA to iccE are sufficient for ilicicolin H biosynthesis and the roles of the remaining enzymes, iccF, iccG and iccH within the pathway have still to be determined. The biosynthesis of ilicicolin H starts with formation of the tetramic acid by the hybrid PKS-NRPS synthetase iccA with the partnering trans-enoyl reductase iccB since iccA lacks a designated enoylreductase (ER) domain. The cytochrome P450 monooxygenase iccC then catalyzes the ring expansion of the tetramate to the acyclic 2-pyridone. The pericyclase iccD further converts the acyclic 2-pyridone into 8-epi-ilicicolin H. Finally, the epimerase iccE converts 8-epi-ilicicolin H into ilicicolin H via epimerizationd. The polypeptide is Short-chain dehydrogenase iccH (Talaromyces variabilis (Penicillium variabile)).